A 332-amino-acid chain; its full sequence is Putative ketol-acid reductoisomerase 3 (332 aa).

The 182-residue stretch at 1 to 182 (MDKTVLDASL…AIPGGIAVIS (182 aa)) folds into the KARI N-terminal Rossmann domain. The KARI C-terminal knotted domain occupies 183–329 (SFEEEALLDL…KELYKILRRK (147 aa)).

It belongs to the ketol-acid reductoisomerase family.

It carries out the reaction (2R)-2,3-dihydroxy-3-methylbutanoate + NADP(+) = (2S)-2-acetolactate + NADPH + H(+). It catalyses the reaction (2R,3R)-2,3-dihydroxy-3-methylpentanoate + NADP(+) = (S)-2-ethyl-2-hydroxy-3-oxobutanoate + NADPH + H(+). It functions in the pathway amino-acid biosynthesis; L-isoleucine biosynthesis; L-isoleucine from 2-oxobutanoate: step 2/4. The protein operates within amino-acid biosynthesis; L-valine biosynthesis; L-valine from pyruvate: step 2/4. This is Putative ketol-acid reductoisomerase 3 (ilvC3) from Saccharolobus solfataricus (strain ATCC 35092 / DSM 1617 / JCM 11322 / P2) (Sulfolobus solfataricus).